The primary structure comprises 267 residues: 4-hydroxy-tetrahydrodipicolinate reductase (267 aa).

NAD(+) contacts are provided by residues 8–13 (GAAGRM) and D34. Residue R35 coordinates NADP(+). NAD(+) contacts are provided by residues 98–100 (GTT) and 122–125 (AANF). H155 serves as the catalytic Proton donor/acceptor. Position 156 (H156) interacts with (S)-2,3,4,5-tetrahydrodipicolinate. K159 functions as the Proton donor in the catalytic mechanism. 165–166 (GT) is a (S)-2,3,4,5-tetrahydrodipicolinate binding site.

It belongs to the DapB family.

The protein localises to the cytoplasm. It carries out the reaction (S)-2,3,4,5-tetrahydrodipicolinate + NAD(+) + H2O = (2S,4S)-4-hydroxy-2,3,4,5-tetrahydrodipicolinate + NADH + H(+). The enzyme catalyses (S)-2,3,4,5-tetrahydrodipicolinate + NADP(+) + H2O = (2S,4S)-4-hydroxy-2,3,4,5-tetrahydrodipicolinate + NADPH + H(+). It functions in the pathway amino-acid biosynthesis; L-lysine biosynthesis via DAP pathway; (S)-tetrahydrodipicolinate from L-aspartate: step 4/4. Functionally, catalyzes the conversion of 4-hydroxy-tetrahydrodipicolinate (HTPA) to tetrahydrodipicolinate. This Pseudomonas putida (strain W619) protein is 4-hydroxy-tetrahydrodipicolinate reductase.